Consider the following 127-residue polypeptide: ADGIFAIDQFTKVLLNYTGHITWNPPAIFKSYCEIIVTYFPFDEQNCSMKLGTRTYDGTVVAIYPEGPRPDLSNYMQSGEWALKDYRGFWHSVNYSCCLDTPYLDITYHFILLRLPLYFIVNVIIPC.

Over 1–127 the chain is Extracellular; the sequence is ADGIFAIDQF…YFIVNVIIPC (127 aa). An intrachain disulfide couples C33 to C47. N46 and N94 each carry an N-linked (GlcNAc...) asparagine glycan. C97 and C98 form a disulfide bridge.

Belongs to the ligand-gated ion channel (TC 1.A.9) family. Acetylcholine receptor (TC 1.A.9.1) subfamily. Alpha-1/CHRNA1 sub-subfamily. One of the alpha chains that assemble within the acetylcholine receptor, a pentamer of two alpha chains, a beta, a delta, and a gamma or epsilon chains.

It is found in the postsynaptic cell membrane. It localises to the cell membrane. The catalysed reaction is K(+)(in) = K(+)(out). The enzyme catalyses Na(+)(in) = Na(+)(out). Its function is as follows. Upon acetylcholine binding, the AChR responds by an extensive change in conformation that affects all subunits and leads to opening of an ion-conducting channel across the plasma membrane. Does not bind alpha-bungarotoxin. This chain is Acetylcholine receptor subunit alpha (CHRNA1), found in Natrix tessellata (Dice snake).